The sequence spans 963 residues: Ras-interacting protein 1 (963 aa).

Over residues 1–10 (MLSGERKEGG) the composition is skewed to basic and acidic residues. Disordered regions lie at residues 1 to 22 (MLSG…LPVG) and 35 to 118 (LGRR…AQRW). Residues 41 to 57 (SAASVKSSSSDTGSRSS) show a composition bias toward low complexity. Residue R94 is modified to Omega-N-methylarginine. Residues 96–113 (SGTGTTGSSGAGGPGTPG) show a composition bias toward gly residues. The Ras-associating domain occupies 144 to 259 (PPGVLKIFGA…RRFELRGREE (116 aa)). 3 positions are modified to phosphoserine: S188, S280, and S292. The tract at residues 267–356 (AFGAADSEGT…LSMAPGAADA (90 aa)) is disordered. Residues 290–301 (AASGGAALASPG) are compositionally biased toward low complexity. Residues 302–313 (PGTGSGAPAGSG) are compositionally biased toward gly residues. Over residues 320 to 333 (NLSLRRSVSELSLQ) the composition is skewed to low complexity. Residues S326, S328, S331, and S419 each carry the phosphoserine modification. Residues 600–897 (GRLARLIKEA…PPAEREAVDT (298 aa)) form the Dilute domain.

Interacts with Ras family members that have been activated by GTP binding. Interacts with HRAS, RAP1A, RAP2, RRAS, RAF1 and RRAS2. Interacts with MYH9 and ARHGAP29. As to expression, highly expressed in heart. Detected at lower levels in placenta and pancreas.

Its subcellular location is the cytoplasm. It localises to the perinuclear region. The protein localises to the golgi apparatus. The protein resides in the golgi stack. In terms of biological role, required for the proper formation of vascular structures that develop via both vasculogenesis and angiogenesis. Acts as a critical and vascular-specific regulator of GTPase signaling, cell architecture, and adhesion, which is essential for endothelial cell morphogenesis and blood vessel tubulogenesis. Regulates the activity of Rho GTPases in part by recruiting ARHGAP29 and suppressing RhoA signaling and dampening ROCK and MYH9 activities in endothelial cells. May act as effector for Golgi-bound HRAS and other Ras-like proteins. May promote HRAS-mediated transformation. Negative regulator of amino acid starvation-induced autophagy. The protein is Ras-interacting protein 1 (RASIP1) of Homo sapiens (Human).